Here is a 363-residue protein sequence, read N- to C-terminus: Ribosomal RNA large subunit methyltransferase M (363 aa).

S-adenosyl-L-methionine is bound by residues S194, 227-230, D246, D266, and D284; that span reads CPGG. K313 (proton acceptor) is an active-site residue.

It belongs to the class I-like SAM-binding methyltransferase superfamily. RNA methyltransferase RlmE family. RlmM subfamily. As to quaternary structure, monomer.

It localises to the cytoplasm. The enzyme catalyses cytidine(2498) in 23S rRNA + S-adenosyl-L-methionine = 2'-O-methylcytidine(2498) in 23S rRNA + S-adenosyl-L-homocysteine + H(+). Catalyzes the 2'-O-methylation at nucleotide C2498 in 23S rRNA. This chain is Ribosomal RNA large subunit methyltransferase M, found in Haemophilus influenzae (strain PittGG).